Consider the following 280-residue polypeptide: Digeranylgeranylglyceryl phosphate synthase (280 aa).

9 helical membrane passes run 4 to 24, 27 to 47, 83 to 103, 104 to 124, 128 to 148, 150 to 170, 199 to 219, 222 to 242, and 260 to 280; these read AAYL…AGIL, IIAT…VLTI, LMYA…FTPL, PLAG…SFLK, LIGN…GGAI, GTQG…VMLA, ATIY…LLLY, WGAF…FGAI, and KILK…AVLL.

Belongs to the UbiA prenyltransferase family. DGGGP synthase subfamily. The cofactor is Mg(2+).

The protein resides in the cell membrane. It catalyses the reaction sn-3-O-(geranylgeranyl)glycerol 1-phosphate + (2E,6E,10E)-geranylgeranyl diphosphate = 2,3-bis-O-(geranylgeranyl)-sn-glycerol 1-phosphate + diphosphate. Its pathway is membrane lipid metabolism; glycerophospholipid metabolism. Its function is as follows. Prenyltransferase that catalyzes the transfer of the geranylgeranyl moiety of geranylgeranyl diphosphate (GGPP) to the C2 hydroxyl of (S)-3-O-geranylgeranylglyceryl phosphate (GGGP). This reaction is the second ether-bond-formation step in the biosynthesis of archaeal membrane lipids. The sequence is that of Digeranylgeranylglyceryl phosphate synthase from Methanospirillum hungatei JF-1 (strain ATCC 27890 / DSM 864 / NBRC 100397 / JF-1).